The primary structure comprises 606 residues: MRATTTAAGITWMSRYIYEYHRLMLEDLAPGAAATLGWPLYREPPPHFLVGYQYLVRTCNDYVFDSRAYSRLRYTETVQPGTQTVNWSVMTNCSYTINAGAYHRFVDVDDFATTLTQIQQAVLAERVVADLALLQPLQGYGSTHMADRGNREVEVERLMQDYYKDLGRCQSDVWGMADRLRIQQAGPKDVVLLKTIRGLKTAYFNYIISSIAQLPGTLEETKLSLPCDCDWLDAFLERFSDPVDMQTLSSLRGVPTQQIIKCIISAVSLPNAPRNASFPILHETELRGGVFELRPRENGRAVTETMRRRRGEMIERFVDRLPVRRRRRRQPPPPVVEEEIMEVEEEEQEIVPGAFQQEVRETVAELIRLLEEELTVAARNSQFFNFAVDFYEAMERLEALGDINELTLRRWILYFFVSEHVATTLNYLFQRLRNYGVFARLVELNLAQVVMRARDSEGGVVYSRVWNEIGLNAFSQLMSRISNDLAATIERAGHGDLQEEEIDQLMAEIAYQDNSGDVQEILRQAAVNDTEIDSVELSFRFKTTGPVVFTQRRQIQDINRRVVAHASQLRAQHLPLPERQADIPLPPLPAGPEPPLPPGARPRRRF.

The Nuclear localization signal motif lies at 320-329 (RLPVRRRRRR). S515 carries the post-translational modification O-(5'-phospho-DNA)-serine. The interval 573-606 (HLPLPERQADIPLPPLPAGPEPPLPPGARPRRRF) is disordered. Over residues 584–600 (PLPPLPAGPEPPLPPGA) the composition is skewed to pro residues.

It belongs to the adenoviridae terminal protein family. In terms of assembly, heterodimer with the polymerase; this heterodimer binds to bp 9 to 18 of the genome. Interacts with host POU2F1; POU2F1 binds to the auxiliary sequences in the inverted terminal repeats and tethers the pTP-POL heterodimer to the origin DNA thereby participating in the assembly of the pre-initiation complex (POL-TP-DBP-NFIA-POU2F1). Preterminal protein is used to replicate viral genome, upon genomic encapsidation it is processed first into iTP and finally into TP by adenovirus protease.

The protein resides in the host nucleus matrix. Protein covalently bound to the viral DNA that acts as a primer for viral genomic replication by DNA strand displacement. Assembles on the viral origin of replication in an initiation complex with viral polymerase, DBP, host NFIA and host POU2F1/OCT1. During initiation, the polymerase covalently couples the first dCTP with Ser-580 of pTP. The terminal protein stimulates the template activity over 20 fold compared to protein-free templates. Neo-synthesized viral genomes are linked to two preterminal proteins, one for each 5' end. These new genomes are encapsidated in the nucleus, and during capsid maturation by viral protease, preterminal protein is first cleaved into intermediary (iTP), then into mature TP. May play a role in host nuclear matrix localization of genomic DNA. The chain is Preterminal protein from Human adenovirus A serotype 12 (HAdV-12).